A 448-amino-acid chain; its full sequence is Methionine aminopeptidase 2 (448 aa).

Residues 1–47 (MTSSVDKVSQKVADVKLGSSKSTKNNKSKGKGKSNKNQVVEDDDEDD) are disordered. Residues 24–34 (KNNKSKGKGKS) show a composition bias toward basic residues. His-198 contacts substrate. The a divalent metal cation site is built by Asp-218, Asp-229, and His-298. His-306 is a substrate binding site. Residues Glu-331 and Glu-429 each coordinate a divalent metal cation.

The protein belongs to the peptidase M24A family. Methionine aminopeptidase eukaryotic type 2 subfamily. Co(2+) is required as a cofactor. It depends on Zn(2+) as a cofactor. Mn(2+) serves as cofactor. The cofactor is Fe(2+).

The protein localises to the cytoplasm. The catalysed reaction is Release of N-terminal amino acids, preferentially methionine, from peptides and arylamides.. Cotranslationally removes the N-terminal methionine from nascent proteins. The N-terminal methionine is often cleaved when the second residue in the primary sequence is small and uncharged (Met-Ala-, Cys, Gly, Pro, Ser, Thr, or Val). In Komagataella phaffii (strain GS115 / ATCC 20864) (Yeast), this protein is Methionine aminopeptidase 2.